A 446-amino-acid polypeptide reads, in one-letter code: MHVLLSKKIARFLLISFVFVLALMVTINHPKTKQMSEQYVTPYLPKSLQPIAKISAEEQRRIQSEQEEAELKQSLEGEAIRNATVNAIKEKIKSYGGNETTLGFMVPSYINHRGSPPKACFVSLITERDSMTQILQSIDEVQVKFNKNFAYPWVFISQGELDGMKQEMIRQAITDSMNGDPELINIKFAEIPADEWVYPEWIDENKAAESLISLANVPDGDSRAVRYQARYFAGFFWRHPVLDEFDWYWRVDPGIKLYCDIDHDLFRWMQDEGKVFGFTLSMSEAKEANEKIWDVTKKFAKDFPKFISENNFKSFITKKDSEDFNNCEFTSNFEIGNLNFYRSPAYRKFFNYIDEEGGIFYWKWSDSIIHTIGLSMLLPKDKIHFFENIGFHYDKYNNCPLNDDIWNQYNCNCDQGNDFTFRSGSCGGHYFDIMKKDKPEGWDRLP.

Residues 1–8 (MHVLLSKK) lie on the Cytoplasmic side of the membrane. A helical; Signal-anchor for type II membrane protein membrane pass occupies residues 9–29 (IARFLLISFVFVLALMVTINH). Residues 30-114 (PKTKQMSEQY…MVPSYINHRG (85 aa)) are stem region. The Lumenal segment spans residues 30–446 (PKTKQMSEQY…DKPEGWDRLP (417 aa)). 2 N-linked (GlcNAc...) asparagine glycosylation sites follow: Asn82 and Asn98. Residues 115-446 (SPPKACFVSL…DKPEGWDRLP (332 aa)) are catalytic. Glu334 acts as the Nucleophile in catalysis.

It belongs to the glycosyltransferase 15 family.

The protein resides in the membrane. Its pathway is protein modification; protein glycosylation. Its function is as follows. Glycosyltransferase that transfers an alpha-D-mannosyl residue from GDP-mannose into lipid-linked oligosaccharide, forming an alpha-(1-&gt;2)-D-mannosyl-D-mannose linkage. Required for addition of mannosylphosphate in yeast mannan. Recognizes any oligosaccharides with at least one alpha-1,2-linked mannobiose unit. This is Mannosyltransferase KTR6 (KTR6) from Saccharomyces cerevisiae (strain ATCC 204508 / S288c) (Baker's yeast).